The chain runs to 163 residues: Olfactory marker protein (163 aa).

Ala2 carries the post-translational modification N-acetylalanine.

The protein belongs to the olfactory marker protein family. In terms of assembly, interacts with BEX1 and BEX2. In terms of tissue distribution, uniquely associated with mature olfactory receptor neurons.

Its subcellular location is the cytoplasm. Its function is as follows. May act as a modulator of the olfactory signal-transduction cascade. This Rattus norvegicus (Rat) protein is Olfactory marker protein (Omp).